Consider the following 294-residue polypeptide: Foldase protein PrsA 1 (294 aa).

The signal sequence occupies residues 1-21 (MTKLKKVMISLVAATLLLLAG). C22 is lipidated: N-palmitoyl cysteine. C22 is lipidated: S-diacylglycerol cysteine. One can recognise a PpiC domain in the interval 135–226 (EPNITVRHIL…YGYHLIQLVK (92 aa)).

It belongs to the PrsA family.

The protein localises to the cell membrane. The catalysed reaction is [protein]-peptidylproline (omega=180) = [protein]-peptidylproline (omega=0). Its function is as follows. Plays a major role in protein secretion by helping the post-translocational extracellular folding of several secreted proteins. This is Foldase protein PrsA 1 (prsA1) from Listeria innocua serovar 6a (strain ATCC BAA-680 / CLIP 11262).